We begin with the raw amino-acid sequence, 155 residues long: Ribosomal RNA large subunit methyltransferase H (155 aa).

Residues L72, G103, and L122–M127 contribute to the S-adenosyl-L-methionine site.

This sequence belongs to the RNA methyltransferase RlmH family. As to quaternary structure, homodimer.

The protein resides in the cytoplasm. It carries out the reaction pseudouridine(1915) in 23S rRNA + S-adenosyl-L-methionine = N(3)-methylpseudouridine(1915) in 23S rRNA + S-adenosyl-L-homocysteine + H(+). In terms of biological role, specifically methylates the pseudouridine at position 1915 (m3Psi1915) in 23S rRNA. The protein is Ribosomal RNA large subunit methyltransferase H of Methylobacillus flagellatus (strain ATCC 51484 / DSM 6875 / VKM B-1610 / KT).